The sequence spans 143 residues: Small ribosomal subunit protein uS12 (143 aa).

Over residues 1 to 20 (MGKPRGLRTARKLKNHRREQ) the composition is skewed to basic residues. The disordered stretch occupies residues 1–28 (MGKPRGLRTARKLKNHRREQRWHDKDYK). Pro62 is subject to Hydroxyproline.

Belongs to the universal ribosomal protein uS12 family. Component of the 40S small ribosomal subunit.

It is found in the cytoplasm. Its subcellular location is the cytosol. The protein resides in the rough endoplasmic reticulum. The sequence is that of Small ribosomal subunit protein uS12 (RPS23) from Lumbricus rubellus (Humus earthworm).